The sequence spans 85 residues: Large ribosomal subunit protein bL27 (85 aa).

A disordered region spans residues 1–20 (MAHKKAGGSTRNGRDSEAKR).

It belongs to the bacterial ribosomal protein bL27 family.

The protein is Large ribosomal subunit protein bL27 of Proteus mirabilis (strain HI4320).